The following is a 488-amino-acid chain: Beta-amylase (488 aa).

The substrate site is built by Asp51, His91, and Asp99. Glu184 serves as the catalytic Proton donor. Residues Lys293, His298, and Thr340 each coordinate substrate. Glu378 (proton acceptor) is an active-site residue. Residues 379-380 and Arg418 contribute to the substrate site; that span reads NA.

It belongs to the glycosyl hydrolase 14 family.

It catalyses the reaction Hydrolysis of (1-&gt;4)-alpha-D-glucosidic linkages in polysaccharides so as to remove successive maltose units from the non-reducing ends of the chains.. In Zea mays (Maize), this protein is Beta-amylase (BMY1).